Reading from the N-terminus, the 957-residue chain is Glycine dehydrogenase (decarboxylating) (957 aa).

N6-(pyridoxal phosphate)lysine is present on Lys-708.

It belongs to the GcvP family. The glycine cleavage system is composed of four proteins: P, T, L and H. The cofactor is pyridoxal 5'-phosphate.

The catalysed reaction is N(6)-[(R)-lipoyl]-L-lysyl-[glycine-cleavage complex H protein] + glycine + H(+) = N(6)-[(R)-S(8)-aminomethyldihydrolipoyl]-L-lysyl-[glycine-cleavage complex H protein] + CO2. The glycine cleavage system catalyzes the degradation of glycine. The P protein binds the alpha-amino group of glycine through its pyridoxal phosphate cofactor; CO(2) is released and the remaining methylamine moiety is then transferred to the lipoamide cofactor of the H protein. The polypeptide is Glycine dehydrogenase (decarboxylating) (Enterobacter sp. (strain 638)).